Reading from the N-terminus, the 231-residue chain is Enolase-phosphatase E1 (231 aa).

The interval 206 to 231 (LLERPGNAPQPKHSHPKISSFENFNP) is disordered.

The protein belongs to the HAD-like hydrolase superfamily. MasA/MtnC family. As to quaternary structure, monomer. Mg(2+) is required as a cofactor.

The catalysed reaction is 5-methylsulfanyl-2,3-dioxopentyl phosphate + H2O = 1,2-dihydroxy-5-(methylsulfanyl)pent-1-en-3-one + phosphate. The protein operates within amino-acid biosynthesis; L-methionine biosynthesis via salvage pathway; L-methionine from S-methyl-5-thio-alpha-D-ribose 1-phosphate: step 3/6. It participates in amino-acid biosynthesis; L-methionine biosynthesis via salvage pathway; L-methionine from S-methyl-5-thio-alpha-D-ribose 1-phosphate: step 4/6. Functionally, bifunctional enzyme that catalyzes the enolization of 2,3-diketo-5-methylthiopentyl-1-phosphate (DK-MTP-1-P) into the intermediate 2-hydroxy-3-keto-5-methylthiopentenyl-1-phosphate (HK-MTPenyl-1-P), which is then dephosphorylated to form the acireductone 1,2-dihydroxy-3-keto-5-methylthiopentene (DHK-MTPene). The polypeptide is Enolase-phosphatase E1 (Leptospira borgpetersenii serovar Hardjo-bovis (strain JB197)).